A 115-amino-acid polypeptide reads, in one-letter code: Variant surface glycoprotein ANTAT 1.8 (115 aa).

Asn42 carries N-linked (GlcNAc...) asparagine glycosylation. Asp92 carries GPI-anchor amidated aspartate lipidation. Residues 93–115 constitute a propeptide, removed in mature form; that stretch reads SSILVNKQLALSVVSAAFAALLF.

Its subcellular location is the cell membrane. In terms of biological role, VSG forms a coat on the surface of the parasite. The trypanosome evades the immune response of the host by expressing a series of antigenically distinct VSGs from an estimated 1000 VSG genes. This chain is Variant surface glycoprotein ANTAT 1.8, found in Trypanosoma brucei brucei.